The sequence spans 364 residues: Aminomethyltransferase (364 aa).

Belongs to the GcvT family. As to quaternary structure, the glycine cleavage system is composed of four proteins: P, T, L and H.

The catalysed reaction is N(6)-[(R)-S(8)-aminomethyldihydrolipoyl]-L-lysyl-[protein] + (6S)-5,6,7,8-tetrahydrofolate = N(6)-[(R)-dihydrolipoyl]-L-lysyl-[protein] + (6R)-5,10-methylene-5,6,7,8-tetrahydrofolate + NH4(+). In terms of biological role, the glycine cleavage system catalyzes the degradation of glycine. In Shigella flexneri, this protein is Aminomethyltransferase.